Consider the following 161-residue polypeptide: 6,7-dimethyl-8-ribityllumazine synthase (161 aa).

Residues tryptophan 31, 63–65 (SFE), and 85–87 (VVI) contribute to the 5-amino-6-(D-ribitylamino)uracil site. 90-91 (GT) is a binding site for (2S)-2-hydroxy-3-oxobutyl phosphate. Histidine 93 acts as the Proton donor in catalysis. Position 118 (phenylalanine 118) interacts with 5-amino-6-(D-ribitylamino)uracil. Residue arginine 132 coordinates (2S)-2-hydroxy-3-oxobutyl phosphate.

Belongs to the DMRL synthase family.

The catalysed reaction is (2S)-2-hydroxy-3-oxobutyl phosphate + 5-amino-6-(D-ribitylamino)uracil = 6,7-dimethyl-8-(1-D-ribityl)lumazine + phosphate + 2 H2O + H(+). The protein operates within cofactor biosynthesis; riboflavin biosynthesis; riboflavin from 2-hydroxy-3-oxobutyl phosphate and 5-amino-6-(D-ribitylamino)uracil: step 1/2. Catalyzes the formation of 6,7-dimethyl-8-ribityllumazine by condensation of 5-amino-6-(D-ribitylamino)uracil with 3,4-dihydroxy-2-butanone 4-phosphate. This is the penultimate step in the biosynthesis of riboflavin. The chain is 6,7-dimethyl-8-ribityllumazine synthase from Arthrobacter sp. (strain FB24).